A 316-amino-acid chain; its full sequence is ATP synthase gamma chain (316 aa).

This sequence belongs to the ATPase gamma chain family. In terms of assembly, F-type ATPases have 2 components, CF(1) - the catalytic core - and CF(0) - the membrane proton channel. CF(1) has five subunits: alpha(3), beta(3), gamma(1), delta(1), epsilon(1). CF(0) has three main subunits: a, b and c.

Its subcellular location is the cellular thylakoid membrane. Functionally, produces ATP from ADP in the presence of a proton gradient across the membrane. The gamma chain is believed to be important in regulating ATPase activity and the flow of protons through the CF(0) complex. The sequence is that of ATP synthase gamma chain from Prochlorococcus marinus (strain MIT 9313).